An 824-amino-acid chain; its full sequence is Leucine--tRNA ligase (824 aa).

The 'HIGH' region motif lies at 42-52 (PYPSGRIHMGH). The 'KMSKS' region signature appears at 581-585 (KMSKS). Lys584 is an ATP binding site.

Belongs to the class-I aminoacyl-tRNA synthetase family.

It localises to the cytoplasm. It carries out the reaction tRNA(Leu) + L-leucine + ATP = L-leucyl-tRNA(Leu) + AMP + diphosphate. This is Leucine--tRNA ligase from Geobacter metallireducens (strain ATCC 53774 / DSM 7210 / GS-15).